A 187-amino-acid chain; its full sequence is ATP synthase subunit delta (187 aa).

It belongs to the ATPase delta chain family. In terms of assembly, F-type ATPases have 2 components, F(1) - the catalytic core - and F(0) - the membrane proton channel. F(1) has five subunits: alpha(3), beta(3), gamma(1), delta(1), epsilon(1). F(0) has three main subunits: a(1), b(2) and c(10-14). The alpha and beta chains form an alternating ring which encloses part of the gamma chain. F(1) is attached to F(0) by a central stalk formed by the gamma and epsilon chains, while a peripheral stalk is formed by the delta and b chains.

The protein localises to the cell membrane. Its function is as follows. F(1)F(0) ATP synthase produces ATP from ADP in the presence of a proton or sodium gradient. F-type ATPases consist of two structural domains, F(1) containing the extramembraneous catalytic core and F(0) containing the membrane proton channel, linked together by a central stalk and a peripheral stalk. During catalysis, ATP synthesis in the catalytic domain of F(1) is coupled via a rotary mechanism of the central stalk subunits to proton translocation. In terms of biological role, this protein is part of the stalk that links CF(0) to CF(1). It either transmits conformational changes from CF(0) to CF(1) or is implicated in proton conduction. This chain is ATP synthase subunit delta, found in Mesomycoplasma hyopneumoniae (strain 7448) (Mycoplasma hyopneumoniae).